Here is a 361-residue protein sequence, read N- to C-terminus: Peptide chain release factor 1 (361 aa).

Position 235 is an N5-methylglutamine (Gln235). Positions 287 to 309 (QKEASAMRSAQVGSGDRSERIRT) are disordered.

The protein belongs to the prokaryotic/mitochondrial release factor family. In terms of processing, methylated by PrmC. Methylation increases the termination efficiency of RF1.

Its subcellular location is the cytoplasm. Functionally, peptide chain release factor 1 directs the termination of translation in response to the peptide chain termination codons UAG and UAA. This Chlamydia caviae (strain ATCC VR-813 / DSM 19441 / 03DC25 / GPIC) (Chlamydophila caviae) protein is Peptide chain release factor 1.